The following is a 155-amino-acid chain: Ribosomal RNA large subunit methyltransferase H (155 aa).

Residues Gly-104 and Leu-123–Leu-128 contribute to the S-adenosyl-L-methionine site.

This sequence belongs to the RNA methyltransferase RlmH family. In terms of assembly, homodimer.

Its subcellular location is the cytoplasm. The catalysed reaction is pseudouridine(1915) in 23S rRNA + S-adenosyl-L-methionine = N(3)-methylpseudouridine(1915) in 23S rRNA + S-adenosyl-L-homocysteine + H(+). Its function is as follows. Specifically methylates the pseudouridine at position 1915 (m3Psi1915) in 23S rRNA. In Marinomonas sp. (strain MWYL1), this protein is Ribosomal RNA large subunit methyltransferase H.